The chain runs to 385 residues: Protein pelota homolog (385 aa).

Lys-162 participates in a covalent cross-link: Glycyl lysine isopeptide (Lys-Gly) (interchain with G-Cter in SUMO2). Ser-374, Ser-380, Ser-381, and Ser-382 each carry phosphoserine.

The protein belongs to the eukaryotic release factor 1 family. Pelota subfamily. In terms of assembly, component of the Pelota-HBS1L complex, also named Dom34-Hbs1 complex, composed of PELO and HBS1L. Interacts with PINK1. Interacts with ABCE1. Interacts with CNOT4. It depends on a divalent metal cation as a cofactor.

It is found in the cytoplasm. Functionally, component of the Pelota-HBS1L complex, a complex that recognizes stalled ribosomes and triggers the No-Go Decay (NGD) pathway. In the Pelota-HBS1L complex, PELO recognizes ribosomes stalled at the 3' end of an mRNA and engages stalled ribosomes by destabilizing mRNA in the mRNA channel. Following mRNA extraction from stalled ribosomes by the SKI complex, the Pelota-HBS1L complex promotes recruitment of ABCE1, which drives the disassembly of stalled ribosomes, followed by degradation of damaged mRNAs as part of the NGD pathway. As part of the PINK1-regulated signaling, upon mitochondrial damage is recruited to the ribosome/mRNA-ribonucleoprotein complex associated to mitochondrial outer membrane thereby enabling the recruitment of autophagy receptors and induction of mitophagy. The polypeptide is Protein pelota homolog (PELO) (Bos taurus (Bovine)).